Consider the following 410-residue polypeptide: MQIKALSVSEINHYIKRIMINDPILSNVYIKGEISNYKLHSSGHIYFTLKDEKSRVSSVMFKTNTEQLKFLPEEGMQVLCRGYISLYERGGLYQFYVDHMEAAGVGALYLAYQQLKEKLEKQGYFDGKFKKEIPLIPRKIAVVTSPTGAAVRDIISVIKRRFPHVEIYLFPVLVQGDRAAPSIARAVELLNLFGGIDVAIIGRGGGSIEELWPFNEETVAEAIFSSQVPIISAVGHETDFTIADFVADLRAPTPSVAAERVVPDVKEVVERLNTLKDRLNKTLVKSIDAKRNQLGIIKSNYYFKNPLNMIYDRQQHLDILMKDLTRNINVKNSLYSNNVHRLGERLNSVSPLSVFSRGYALAENKKGERIKTISNVKLKESITVQLIDGQLSCEVTNILKEDKLVGKNQI.

This sequence belongs to the XseA family. As to quaternary structure, heterooligomer composed of large and small subunits.

It is found in the cytoplasm. It carries out the reaction Exonucleolytic cleavage in either 5'- to 3'- or 3'- to 5'-direction to yield nucleoside 5'-phosphates.. Its function is as follows. Bidirectionally degrades single-stranded DNA into large acid-insoluble oligonucleotides, which are then degraded further into small acid-soluble oligonucleotides. This chain is Exodeoxyribonuclease 7 large subunit, found in Alkaliphilus metalliredigens (strain QYMF).